Reading from the N-terminus, the 591-residue chain is Parathyroid hormone/parathyroid hormone-related peptide receptor (591 aa).

The signal sequence occupies residues 1–26; it reads MGTARIAPSLALLLCCPVLSSAYALV. The Extracellular portion of the chain corresponds to 27–188; that stretch reads DADDVFTKEE…REREVFDRLG (162 aa). 3 disulfides stabilise this stretch: Cys48–Cys117, Cys108–Cys148, and Cys131–Cys170. The disordered stretch occupies residues 67 to 104; it reads KGWTPASTSGKPRKEKAPGKFYPESKENKDVPTGSRRR. The span at 81 to 96 shows a compositional bias: basic and acidic residues; sequence EKAPGKFYPESKENKD. Residues Asn151, Asn161, Asn166, and Asn176 are each glycosylated (N-linked (GlcNAc...) asparagine). The helical transmembrane segment at 189-212 threads the bilayer; sequence MIYTVGYSMSLASLTVAVLILAYF. Residues 213 to 219 lie on the Cytoplasmic side of the membrane; it reads RRLHCTR. A helical membrane pass occupies residues 220 to 239; it reads NYIHMHMFLSFMLRAASIFV. The Extracellular portion of the chain corresponds to 240 to 282; it reads KDAVLYSGFTLDEAERLTEEELHIIAQVPPPPAAAAVGYAGCR. A helical transmembrane segment spans residues 283 to 306; the sequence is VAVTFFLYFLATNYYWILVEGLYL. The Cytoplasmic segment spans residues 307 to 320; sequence HSLIFMAFFSEKKY. A helical transmembrane segment spans residues 321–342; the sequence is LWGFTIFGWGLPAVFVAVWVGV. Over 343 to 361 the chain is Extracellular; it reads RATLANTGCWDLSSGHKKW. The helical transmembrane segment at 362 to 382 threads the bilayer; it reads IIQVPILASVVLNFILFINII. The Cytoplasmic portion of the chain corresponds to 383-409; that stretch reads RVLATKLRETNAGRCDTRQQYRKLLRS. Residues 410-428 traverse the membrane as a helical segment; the sequence is TLVLVPLFGVHYTVFMALP. At 429-440 the chain is on the extracellular side; the sequence is YTEVSGTLWQIQ. Residues 441 to 463 traverse the membrane as a helical segment; sequence MHYEMLFNSFQGFFVAIIYCFCN. The Cytoplasmic segment spans residues 464 to 591; sequence GEVQAEIRKS…LLQEEWETVM (128 aa). The short motif at 474 to 477 is the Important for interaction with G proteins element; it reads WSRW.

Belongs to the G-protein coupled receptor 2 family. As to quaternary structure, homodimer in the absence of bound ligand. Peptide hormone binding leads to dissociation of the homodimer. In terms of processing, N-glycosylated. As to expression, detected in kidney.

The protein resides in the cell membrane. Functionally, G-protein-coupled receptor for parathyroid hormone (PTH) and for parathyroid hormone-related peptide (PTHLH). Ligand binding causes a conformation change that triggers signaling via guanine nucleotide-binding proteins (G proteins) and modulates the activity of downstream effectors, such as adenylate cyclase (cAMP). PTH1R is coupled to G(s) G alpha proteins and mediates activation of adenylate cyclase activity. PTHLH dissociates from PTH1R more rapidly than PTH; as consequence, the cAMP response induced by PTHLH decays faster than the response induced by PTH. This Mus musculus (Mouse) protein is Parathyroid hormone/parathyroid hormone-related peptide receptor (Pth1r).